Reading from the N-terminus, the 376-residue chain is Dihydroorotate dehydrogenase (quinone) (376 aa).

FMN is bound by residues alanine 78–lysine 82 and threonine 102. Lysine 82 is a binding site for substrate. Asparagine 127 to phenylalanine 131 contacts substrate. FMN is bound by residues asparagine 157 and asparagine 190. Asparagine 190 contributes to the substrate binding site. The active-site Nucleophile is serine 193. Position 195 (asparagine 195) interacts with substrate. FMN-binding residues include lysine 228 and threonine 256. Asparagine 257–threonine 258 provides a ligand contact to substrate. FMN-binding positions include glycine 286, glycine 315, and tyrosine 336–threonine 337.

This sequence belongs to the dihydroorotate dehydrogenase family. Type 2 subfamily. Monomer. The cofactor is FMN.

It is found in the cell membrane. The enzyme catalyses (S)-dihydroorotate + a quinone = orotate + a quinol. The protein operates within pyrimidine metabolism; UMP biosynthesis via de novo pathway; orotate from (S)-dihydroorotate (quinone route): step 1/1. Catalyzes the conversion of dihydroorotate to orotate with quinone as electron acceptor. The sequence is that of Dihydroorotate dehydrogenase (quinone) from Trichormus variabilis (strain ATCC 29413 / PCC 7937) (Anabaena variabilis).